The following is an 84-amino-acid chain: Extender of the chronological lifespan protein 2 (84 aa).

The protein belongs to the ecl1 family.

Its subcellular location is the nucleus. In terms of biological role, involved in chronological cell aging. In Schizosaccharomyces pombe (strain 972 / ATCC 24843) (Fission yeast), this protein is Extender of the chronological lifespan protein 2 (ecl2).